Reading from the N-terminus, the 548-residue chain is Synaptic vesicle 2-related protein (548 aa).

Residues 1–87 (MEDDLFQLRH…GFGKFQWKLS (87 aa)) are Cytoplasmic-facing. The chain crosses the membrane as a helical span at residues 88-108 (MLTGLAWMADAMEMMILSILA). The Vesicular segment spans residues 109 to 119 (PQLHCEWRLPS). The helical transmembrane segment at 120-140 (WQVALLTSVVFIGMMASSSLW) threads the bilayer. At 141-156 (GNVSDQYGRRTGLKIS) the chain is on the cytoplasmic side. Residues 157 to 177 (VIWTLYYGILSAFAPVYSWIL) form a helical membrane-spanning segment. Over 178-180 (VLR) the chain is Vesicular. Residues 181 to 201 (GLVGFGIGGVPQSVTLYAEFL) traverse the membrane as a helical segment. The Cytoplasmic portion of the chain corresponds to 202–209 (PMKSRAKC). Residues 210 to 230 (ILLIEIFWALGTVFEVLLAIF) form a helical membrane-spanning segment. Over 231–238 (VMPTLGWR) the chain is Vesicular. A helical membrane pass occupies residues 239–259 (WLLILSALPLMLFAILCFWLP). The Cytoplasmic segment spans residues 260–316 (ESARYEVLSGNQEKALATLKRIATENGAPMPLGKLIVSRQEDRGKIRDLFSPQFRCT). A helical membrane pass occupies residues 317–337 (TLLLWFIWFSNAFSYYGLVLL). Topologically, residues 338–373 (TTELFQAGDVCSISNQRKAVKPKCSLACEYLTVEDY) are vesicular. The chain crosses the membrane as a helical span at residues 374 to 394 (TDLLWTTLSEFPGLLVTLWII). Over 395–401 (DRVGRKK) the chain is Cytoplasmic. The chain crosses the membrane as a helical span at residues 402–422 (TMAICFIIFSFSALLLFLCVG). At 423–424 (RN) the chain is on the vesicular side. A helical transmembrane segment spans residues 425-445 (VLTVFLFIARAFISGGFQAAY). Over 446-457 (VYTPEVYPTATR) the chain is Cytoplasmic. A helical transmembrane segment spans residues 458–478 (ALGLGTCSGMARVGALITPFI). The Vesicular segment spans residues 479 to 486 (AQVMLESS). A helical transmembrane segment spans residues 487 to 507 (IYLTVLVYSGCCVLAAVASCF). The Cytoplasmic segment spans residues 508-548 (LPIETKGRGLQESSHREWGQEMVGRGTHNVGATPSHSGSQE). The disordered stretch occupies residues 519-548 (ESSHREWGQEMVGRGTHNVGATPSHSGSQE). Residues 537 to 548 (VGATPSHSGSQE) show a composition bias toward polar residues.

This sequence belongs to the major facilitator superfamily. In terms of tissue distribution, detected in embryonic trigeminal ganglion and spinal cord.

The protein localises to the cytoplasmic vesicle. The protein resides in the secretory vesicle. It localises to the synaptic vesicle membrane. The protein is Synaptic vesicle 2-related protein (svop) of Xenopus laevis (African clawed frog).